Consider the following 333-residue polypeptide: MKIAVSGAGSWGTTLAVLLANKGHEVLLWAHRPEFAAALESDRENIRYLKGVRFPENLHVVSSLRDAVISSEMVVTAVPSQALRETVAMFSDCSLDGKIIVNVSKGIELKSGKRMSEVLLEVLPTLHASQVATLSGPSHAEEVSKGQPTTVVASSVSMGTAEIVQEAFHTGMFRVYVNTDIIGVELAGAVKNIIAIAAGITEGVGFGDNAKAAIITRGLAEMSRLCIRLGADPHTVSGLSGIGDLVVTCLSRHSRNRYVGEQIGAGRSLDDIVSQMNMVAEGVLTSKAVFELSRSVGVEMPITQAVYEMLFEHKPVQEAILDLMNREPKKEHY.

5 residues coordinate NADPH: S10, W11, H31, R32, and K105. Residues K105, G136, and S138 each contribute to the sn-glycerol 3-phosphate site. Position 140 (A140) interacts with NADPH. Residues K191, D244, S254, R255, and N256 each contribute to the sn-glycerol 3-phosphate site. Residue K191 is the Proton acceptor of the active site. Residue R255 participates in NADPH binding. NADPH contacts are provided by V279 and E281.

Belongs to the NAD-dependent glycerol-3-phosphate dehydrogenase family.

It localises to the cytoplasm. It catalyses the reaction sn-glycerol 3-phosphate + NAD(+) = dihydroxyacetone phosphate + NADH + H(+). It carries out the reaction sn-glycerol 3-phosphate + NADP(+) = dihydroxyacetone phosphate + NADPH + H(+). It functions in the pathway membrane lipid metabolism; glycerophospholipid metabolism. Its function is as follows. Catalyzes the reduction of the glycolytic intermediate dihydroxyacetone phosphate (DHAP) to sn-glycerol 3-phosphate (G3P), the key precursor for phospholipid synthesis. This Chlorobium phaeobacteroides (strain DSM 266 / SMG 266 / 2430) protein is Glycerol-3-phosphate dehydrogenase [NAD(P)+].